Consider the following 103-residue polypeptide: Salivary thrombin inhibitor anophelin (103 aa).

A signal peptide spans 1 to 21 (MASKLFVLAFLCLALVVVVQS). Residues 24–103 (QYARGDVPTY…PAASSSESDE (80 aa)) are disordered. Residues 56-68 (EEFDPSLLEEHAD) form a blocks exosite I of host thrombin region. The interval 74–77 (DPGR) is blocks active site cleft of host thrombin in a reverse direction compared to substrates. The segment covering 91–103 (ASAPAASSSESDE) has biased composition (low complexity).

This sequence belongs to the anophelin family. As to quaternary structure, interacts with human F2 (thrombin); the interaction results in thrombin inhibition. Female salivary gland (at protein level). Not detected in female midgut, head, carcass and male tissues (at protein level).

The protein resides in the secreted. Increasing concentration of NaCl decreases affinity for thrombin. Its function is as follows. Salivary protein with anticoagulant activity that inhibits host thrombin (F2); binds to the proteinase in a reverse orientation (opposite to substrates). The sequence is that of Salivary thrombin inhibitor anophelin from Anopheles gambiae (African malaria mosquito).